Here is a 306-residue protein sequence, read N- to C-terminus: Protodermal factor 1 (306 aa).

Positions 1–23 (MRGMVSFAVWALFAALLSQQLFA) are cleaved as a signal peptide. A compositionally biased stretch (low complexity) spans 40–56 (PPSGSHGTPPSHTPPSS). Residues 40–156 (PPSGSHGTPP…VVTPPSPIVD (117 aa)) are disordered. Positions 62–83 (PYDPSPSTPSHPSPPSHTPTPS) are enriched in pro residues. Residues 84-99 (TPSHTPTPHTPSHTPT) are compositionally biased toward low complexity. The span at 139–154 (SPPPRTPVVVTPPSPI) shows a compositional bias: pro residues.

As to expression, confined to the shoot apical meristem (SAM) at the layer L1 in vegetative, infloresence and floral meristems, as well as in protoderm of organ primordia, including during embryogenesis. Also present in the tip of emerging lateral root primordia.

May be involved in the regulation of meristem growth. The chain is Protodermal factor 1 (PDF1) from Arabidopsis thaliana (Mouse-ear cress).